The following is a 506-amino-acid chain: GPI mannosyltransferase 3 (506 aa).

Asparagine 115 carries N-linked (GlcNAc...) asparagine glycosylation. 6 helical membrane-spanning segments follow: residues 180–200, 229–249, 257–277, 285–305, 330–350, and 358–378; these read AFACFIRPTNILVWIFPLLFW, YGRLFGIFVLCVSLFLVNIIA, FVFPIISFFQFNVTSGLSSLY, YLSQALPLICGGFLPFVLLTM, FVYPISPILLTLAGKFFSSFS, and FFFLIGLGHALVITFLCRFHQ. Asparagine 395 carries an N-linked (GlcNAc...) asparagine glycan.

It belongs to the glycosyltransferase 22 family. PIGB subfamily.

The protein resides in the endoplasmic reticulum membrane. The protein operates within glycolipid biosynthesis; glycosylphosphatidylinositol-anchor biosynthesis. Mannosyltransferase involved in glycosylphosphatidylinositol-anchor biosynthesis. Transfers the third mannose to Man2-GlcN-acyl-PI during GPI precursor assembly. This is GPI mannosyltransferase 3 (gpi10) from Schizosaccharomyces pombe (strain 972 / ATCC 24843) (Fission yeast).